Here is an 843-residue protein sequence, read N- to C-terminus: Protein translocase subunit SecA (843 aa).

Residues Q85, 103–107 (GEGKT), and D490 contribute to the ATP site. The tract at residues 799-834 (KNAVENRSDDSLPKQPVKAEPRVGRNDPCPCGSGKK) is disordered. Over residues 802 to 823 (VENRSDDSLPKQPVKAEPRVGR) the composition is skewed to basic and acidic residues. Positions 827, 829, 838, and 839 each coordinate Zn(2+).

The protein belongs to the SecA family. Monomer and homodimer. Part of the essential Sec protein translocation apparatus which comprises SecA, SecYEG and auxiliary proteins SecDF. Other proteins may also be involved. It depends on Zn(2+) as a cofactor.

Its subcellular location is the cell membrane. The protein resides in the cytoplasm. The enzyme catalyses ATP + H2O + cellular proteinSide 1 = ADP + phosphate + cellular proteinSide 2.. Functionally, part of the Sec protein translocase complex. Interacts with the SecYEG preprotein conducting channel. Has a central role in coupling the hydrolysis of ATP to the transfer of proteins into and across the cell membrane, serving as an ATP-driven molecular motor driving the stepwise translocation of polypeptide chains across the membrane. This Heliobacterium modesticaldum (strain ATCC 51547 / Ice1) protein is Protein translocase subunit SecA.